The primary structure comprises 358 residues: Chorismate synthase (358 aa).

NADP(+) is bound by residues R48 and R54. Residues 125–127 (RSS), G282, 297–301 (KPPAS), and R323 each bind FMN.

The protein belongs to the chorismate synthase family. As to quaternary structure, homotetramer. Requires FMNH2 as cofactor.

It catalyses the reaction 5-O-(1-carboxyvinyl)-3-phosphoshikimate = chorismate + phosphate. Its pathway is metabolic intermediate biosynthesis; chorismate biosynthesis; chorismate from D-erythrose 4-phosphate and phosphoenolpyruvate: step 7/7. Functionally, catalyzes the anti-1,4-elimination of the C-3 phosphate and the C-6 proR hydrogen from 5-enolpyruvylshikimate-3-phosphate (EPSP) to yield chorismate, which is the branch point compound that serves as the starting substrate for the three terminal pathways of aromatic amino acid biosynthesis. This reaction introduces a second double bond into the aromatic ring system. The sequence is that of Chorismate synthase from Roseiflexus castenholzii (strain DSM 13941 / HLO8).